The following is an 86-amino-acid chain: Triosephosphate isomerase (86 aa).

Glu-62 (proton acceptor) is an active-site residue.

Belongs to the triosephosphate isomerase family. As to quaternary structure, homodimer.

It catalyses the reaction D-glyceraldehyde 3-phosphate = dihydroxyacetone phosphate. The protein operates within carbohydrate biosynthesis; gluconeogenesis. Its pathway is carbohydrate degradation; glycolysis; D-glyceraldehyde 3-phosphate from glycerone phosphate: step 1/1. In Platanus orientalis (Oriental plane-tree), this protein is Triosephosphate isomerase.